A 226-amino-acid chain; its full sequence is V-type proton ATPase subunit E 1 (226 aa).

A2 is modified (N-acetylalanine). Y56 is modified (phosphotyrosine).

The protein belongs to the V-ATPase E subunit family. V-ATPase is a heteromultimeric enzyme made up of two complexes: the ATP-hydrolytic V1 complex and the proton translocation V0 complex. The V1 complex consists of three catalytic AB heterodimers that form a heterohexamer, three peripheral stalks each consisting of EG heterodimers, one central rotor including subunits D and F, and the regulatory subunits C and H. The proton translocation complex V0 consists of the proton transport subunit a, a ring of proteolipid subunits c9c'', rotary subunit d, subunits e and f, and the accessory subunits ATP6AP1/Ac45 and ATP6AP2/PRR. Interacts with RABL2/RABL2A; binds preferentially to GTP-bound RABL2. Interacts with ALDOC. Interacts with RAB11B. Kidney; localizes to early distal nephron, encompassing thick ascending limbs and distal convoluted tubules (at protein level). Ubiquitous. High expression in the skin.

Its subcellular location is the apical cell membrane. The protein resides in the cytoplasmic vesicle. It is found in the secretory vesicle. It localises to the synaptic vesicle membrane. The protein localises to the clathrin-coated vesicle membrane. Its function is as follows. Subunit of the V1 complex of vacuolar(H+)-ATPase (V-ATPase), a multisubunit enzyme composed of a peripheral complex (V1) that hydrolyzes ATP and a membrane integral complex (V0) that translocates protons. V-ATPase is responsible for acidifying and maintaining the pH of intracellular compartments and in some cell types, is targeted to the plasma membrane, where it is responsible for acidifying the extracellular environment. This chain is V-type proton ATPase subunit E 1 (ATP6V1E1), found in Homo sapiens (Human).